Consider the following 601-residue polypeptide: Elongation factor 4 (601 aa).

Positions S5–N187 constitute a tr-type G domain. GTP is bound by residues D17–T22 and N134–D137.

This sequence belongs to the TRAFAC class translation factor GTPase superfamily. Classic translation factor GTPase family. LepA subfamily.

It is found in the cell inner membrane. It carries out the reaction GTP + H2O = GDP + phosphate + H(+). In terms of biological role, required for accurate and efficient protein synthesis under certain stress conditions. May act as a fidelity factor of the translation reaction, by catalyzing a one-codon backward translocation of tRNAs on improperly translocated ribosomes. Back-translocation proceeds from a post-translocation (POST) complex to a pre-translocation (PRE) complex, thus giving elongation factor G a second chance to translocate the tRNAs correctly. Binds to ribosomes in a GTP-dependent manner. The sequence is that of Elongation factor 4 from Orientia tsutsugamushi (strain Ikeda) (Rickettsia tsutsugamushi).